The following is a 442-amino-acid chain: uncharacterized protein (442 aa).

The N-terminal stretch at 1-23 (MEILLIVLGAVVAGLLCPVQTAA) is a signal peptide. Disordered regions lie at residues 36-67 (TSIS…NSSD) and 91-115 (ANET…TNTR). Low complexity predominate over residues 48–67 (TSSGELSQSTFSSSSTNSSD). 11 N-linked (GlcNAc...) asparagine glycosylation sites follow: Asn64, Asn92, Asn99, Asn130, Asn174, Asn225, Asn244, Asn346, Asn363, Asn386, and Asn398.

The protein resides in the secreted. This is an uncharacterized protein from Arthroderma benhamiae (strain ATCC MYA-4681 / CBS 112371) (Trichophyton mentagrophytes).